The primary structure comprises 417 residues: Exodeoxyribonuclease 7 large subunit (417 aa).

This sequence belongs to the XseA family. Heterooligomer composed of large and small subunits.

The protein resides in the cytoplasm. It carries out the reaction Exonucleolytic cleavage in either 5'- to 3'- or 3'- to 5'-direction to yield nucleoside 5'-phosphates.. Bidirectionally degrades single-stranded DNA into large acid-insoluble oligonucleotides, which are then degraded further into small acid-soluble oligonucleotides. The sequence is that of Exodeoxyribonuclease 7 large subunit from Lactococcus lactis subsp. cremoris (strain MG1363).